The primary structure comprises 178 residues: uncharacterized protein (178 aa).

5 helical membrane passes run 13 to 33 (GIVL…FFMP), 48 to 68 (MLNA…LIMI), 80 to 100 (ILAA…YHSI), 115 to 135 (IYFF…PLAL), and 155 to 175 (WTMP…LMIS).

Its subcellular location is the cell membrane. This is an uncharacterized protein from Bacillus subtilis (strain 168).